Here is a 278-residue protein sequence, read N- to C-terminus: Elongation factor Ts (278 aa).

An involved in Mg(2+) ion dislocation from EF-Tu region spans residues 81–84 (TDFV).

This sequence belongs to the EF-Ts family.

It is found in the cytoplasm. Functionally, associates with the EF-Tu.GDP complex and induces the exchange of GDP to GTP. It remains bound to the aminoacyl-tRNA.EF-Tu.GTP complex up to the GTP hydrolysis stage on the ribosome. The sequence is that of Elongation factor Ts from Thermobifida fusca (strain YX).